The primary structure comprises 130 residues: Small ribosomal subunit protein uS13 (130 aa).

A compositionally biased stretch (basic residues) spans 97–116; it reads PVRGQRTKTNARTRRGKRKT. Positions 97–130 are disordered; the sequence is PVRGQRTKTNARTRRGKRKTVGAGKSTSSIKRVK. Residues 121 to 130 are compositionally biased toward polar residues; the sequence is KSTSSIKRVK.

Belongs to the universal ribosomal protein uS13 family. As to quaternary structure, part of the 30S ribosomal subunit. Forms a loose heterodimer with protein S19. Forms two bridges to the 50S subunit in the 70S ribosome.

Located at the top of the head of the 30S subunit, it contacts several helices of the 16S rRNA. In the 70S ribosome it contacts the 23S rRNA (bridge B1a) and protein L5 of the 50S subunit (bridge B1b), connecting the 2 subunits; these bridges are implicated in subunit movement. Contacts the tRNAs in the A and P-sites. This Endomicrobium trichonymphae protein is Small ribosomal subunit protein uS13.